The following is a 466-amino-acid chain: Anthocyanidin 3-O-glucosyltransferase 1 (466 aa).

The Proton acceptor role is filled by His22. Residues His22 and Gln87 each contribute to the an anthocyanidin site. Catalysis depends on Asp122, which acts as the Charge relay. Thr145 contacts UDP-alpha-D-glucose. His154 contacts an anthocyanidin. UDP-alpha-D-glucose-binding residues include Ala346, Gln348, His363, Trp366, Asn367, Ser368, and Glu371. Gly386 serves as a coordination point for an anthocyanidin. 2 residues coordinate UDP-alpha-D-glucose: Asp387 and Gln388.

Belongs to the UDP-glycosyltransferase family. As to expression, highest expression detected in receptacles and achenes, with very low levels detected in runners, leaves, flowers, crowns and green receptacles.

It carries out the reaction an anthocyanidin + UDP-alpha-D-glucose + H(+) = an anthocyanidin 3-O-beta-D-glucoside + UDP. The catalysed reaction is cyanidin + UDP-alpha-D-glucose = cyanidin 3-O-beta-D-glucoside + UDP + H(+). The enzyme catalyses pelargonidin + UDP-alpha-D-glucose = pelargonidin 3-O-beta-D-glucoside + UDP. It catalyses the reaction peonidin + UDP-alpha-D-glucose = peonidin 3-O-beta-D-glucoside + UDP. It carries out the reaction delphinidin + UDP-alpha-D-glucose = delphinidin 3-O-beta-D-glucoside + UDP. The catalysed reaction is a flavonol + UDP-alpha-D-glucose = a flavonol 3-O-beta-D-glucoside + UDP + H(+). The protein operates within pigment biosynthesis; anthocyanin biosynthesis. In the presence of other necessary color factors, this glycosylation reaction allows the accumulation of anthocyanin pigments. Uses UDP-Glc as a sugar donor, but not UDP-Gal or UDP-GlcUA. Anthocyanidins are the preferred substrates in vivo, but flavonols can also be glucosylated in vitro. This chain is Anthocyanidin 3-O-glucosyltransferase 1, found in Fragaria ananassa (Strawberry).